The sequence spans 47 residues: Laccase-2d (47 aa).

Residues 2–47 form the Plastocyanin-like domain; sequence TGPVADLHIINKDLSPDGFQRPTVVAGGGRDVVSIGRAGDNVTIRF.

The protein belongs to the multicopper oxidase family. As to quaternary structure, homodimer. Cu cation is required as a cofactor. Post-translationally, N-glycosylated; contains 17% carbohydrates.

It is found in the secreted. It carries out the reaction 4 hydroquinone + O2 = 4 benzosemiquinone + 2 H2O. With respect to regulation, inhibited by sodium azide, SDS and mercaptoethanol, but not by 4-hexyl resocinol, L-cysteine and dithiothreitol. Activity is inhibited by the heavy metal ions Cr, W, Sn, Ag(+) and Hg(2+), but not by Pb(2+), Fe(3+), Ni(2+), Li(2+), Co(2+) or Cd(2+). Functionally, lignin degradation and detoxification of lignin-derived products. Has highest activity towards ABTS, also active towards ferulic acid and guaiacol, but is not active towards tyrosine, vanillic acid, 2,5-dimethyl aniline, p-anisidine or violuric acid. The protein is Laccase-2d of Cerrena unicolor (Canker rot fungus).